Reading from the N-terminus, the 1409-residue chain is DNA-directed RNA polymerase subunit beta' (1409 aa).

Residues C70, C72, C85, and C88 each contribute to the Zn(2+) site. D460, D462, and D464 together coordinate Mg(2+). Zn(2+) contacts are provided by C814, C888, C895, and C898.

This sequence belongs to the RNA polymerase beta' chain family. The RNAP catalytic core consists of 2 alpha, 1 beta, 1 beta' and 1 omega subunit. When a sigma factor is associated with the core the holoenzyme is formed, which can initiate transcription. It depends on Mg(2+) as a cofactor. Requires Zn(2+) as cofactor.

It catalyses the reaction RNA(n) + a ribonucleoside 5'-triphosphate = RNA(n+1) + diphosphate. Functionally, DNA-dependent RNA polymerase catalyzes the transcription of DNA into RNA using the four ribonucleoside triphosphates as substrates. The chain is DNA-directed RNA polymerase subunit beta' from Shewanella violacea.